Here is a 408-residue protein sequence, read N- to C-terminus: Probable cysteine desulfurase (408 aa).

Lysine 225 is subject to N6-(pyridoxal phosphate)lysine.

This sequence belongs to the class-V pyridoxal-phosphate-dependent aminotransferase family. Csd subfamily. Pyridoxal 5'-phosphate is required as a cofactor.

It carries out the reaction (sulfur carrier)-H + L-cysteine = (sulfur carrier)-SH + L-alanine. In terms of biological role, catalyzes the removal of elemental sulfur and selenium atoms from L-cysteine, L-cystine, L-selenocysteine, and L-selenocystine to produce L-alanine. The sequence is that of Probable cysteine desulfurase (csd) from Mycoplasma genitalium (strain ATCC 33530 / DSM 19775 / NCTC 10195 / G37) (Mycoplasmoides genitalium).